Consider the following 906-residue polypeptide: Protein translocase subunit SecA (906 aa).

ATP contacts are provided by residues Gln-89, 107 to 111 (GEGKT), and Asp-502. A disordered region spans residues 868–887 (VPPAQRDPADPRTWGKVSRN). Zn(2+) is bound by residues Cys-890, Cys-892, Cys-901, and His-902.

It belongs to the SecA family. In terms of assembly, monomer and homodimer. Part of the essential Sec protein translocation apparatus which comprises SecA, SecYEG and auxiliary proteins SecDF-YajC and YidC. Zn(2+) is required as a cofactor.

The protein localises to the cell inner membrane. Its subcellular location is the cytoplasm. The catalysed reaction is ATP + H2O + cellular proteinSide 1 = ADP + phosphate + cellular proteinSide 2.. Its function is as follows. Part of the Sec protein translocase complex. Interacts with the SecYEG preprotein conducting channel. Has a central role in coupling the hydrolysis of ATP to the transfer of proteins into and across the cell membrane, serving both as a receptor for the preprotein-SecB complex and as an ATP-driven molecular motor driving the stepwise translocation of polypeptide chains across the membrane. The sequence is that of Protein translocase subunit SecA from Brucella melitensis biotype 1 (strain ATCC 23456 / CCUG 17765 / NCTC 10094 / 16M).